Here is a 474-residue protein sequence, read N- to C-terminus: L-lactate permease (474 aa).

A run of 11 helical transmembrane segments spans residues 4–21, 28–48, 63–85, 105–127, 142–164, 177–199, 209–231, 238–255, 281–303, 324–346, and 387–409; these read AILA…LAVF, ACFI…HFSI, FWPI…ASGG, LILA…AVAI, AALI…LPVT, LSVI…LVSL, GVFG…VSNY, SIIG…FVNL, FILV…QLLA, WLTS…QGMS, and IAVS…IGTL.

The protein belongs to the lactate permease family.

It is found in the cell membrane. In terms of biological role, plays a role in L-lactate utilization. The polypeptide is L-lactate permease (lctP) (Streptococcus iniae (Streptococcus shiloi)).